We begin with the raw amino-acid sequence, 318 residues long: 2-keto-3-deoxygluconate permease (318 aa).

The next 10 membrane-spanning stretches (helical) occupy residues 10–30 (LPGG…TLWP), 42–62 (GLIS…GATI), 82–102 (IAVA…GGVS), 109–129 (LSVL…YAAL), 139–159 (AGAV…LILG), 163–183 (LASF…LGFA), 201–221 (TLVP…TIAH), 224–244 (TSGV…LLLA), 257–277 (VAAS…AGMA), and 289–309 (ALVA…TALY).

This sequence belongs to the KdgT transporter family.

It is found in the cell inner membrane. It carries out the reaction 2-dehydro-3-deoxy-D-gluconate(in) + H(+)(in) = 2-dehydro-3-deoxy-D-gluconate(out) + H(+)(out). Catalyzes the proton-dependent uptake of 2-keto-3-deoxygluconate (KDG) into the cell. The chain is 2-keto-3-deoxygluconate permease from Xanthomonas axonopodis pv. citri (strain 306).